The primary structure comprises 637 residues: Acyl-CoA ligase cm3C (637 aa).

ATP contacts are provided by residues Thr-282–Lys-290, His-423–Thr-428, Asp-507, Arg-526, and Lys-624. The interval Asp-353–His-423 is SBD1. Positions Ala-424–Tyr-486 are SBD2.

It belongs to the ATP-dependent AMP-binding enzyme family.

The protein operates within secondary metabolite biosynthesis. In terms of biological role, acyl-CoA ligase; part of the gene cluster that mediates the biosynthesis of beauveriolides I and III, cyclodepsipeptides acting as inhibitors of the acyl-CoA:cholesterol acyltransferase. The HR-PKS cm3B initiates the biosynthesis of beauveriolides by iteratively catalyzing the formation of the linear polyketide chain. The ATP-dependent acetyl-CoA ligase cm3D converts the polyketide carboxylic acid to a CoA thioester which id shuttled to the first T domain in the NRPS cm3A by the acetyltransferase cm3C. Cm3A contains 13 domains and assembles the polyketide chain, L-phenylalanine, L-alanine, and D-leucine (or D-allo-isoleucine) to form beauveriolide I (or beauveriolide III). The production of both beauveriolides I and III suggests the substrate adaptability of cm3B, using different amino acids as substrates. This Cordyceps militaris (strain CM01) (Caterpillar fungus) protein is Acyl-CoA ligase cm3C.